A 287-amino-acid polypeptide reads, in one-letter code: Membrane protein insertase YidC 2 (287 aa).

A signal peptide spans 1–26; sequence MKKKKRFKQKLLIASLVIGLVAVLSG. Cys-27 carries N-palmitoyl cysteine lipidation. Cys-27 is lipidated: S-diacylglycerol cysteine. A run of 5 helical transmembrane segments spans residues 65–85, 135–155, 178–198, 207–224, and 228–250; these read YAVGIIVVTILIRLLIMPLMI, MMGCLPLLIQMPILLGFYQAI, YILPIVAALTTFLSSKISMMG, AMIVYIMPVMILFMGITL, and LALYWIIGNIFTVFQTLLINNPF.

The protein belongs to the OXA1/ALB3/YidC family. Type 2 subfamily.

The protein localises to the cell membrane. Required for the insertion and/or proper folding and/or complex formation of integral membrane proteins into the membrane. Involved in integration of membrane proteins that insert both dependently and independently of the Sec translocase complex, as well as at least some lipoproteins. This Listeria innocua serovar 6a (strain ATCC BAA-680 / CLIP 11262) protein is Membrane protein insertase YidC 2.